Consider the following 206-residue polypeptide: Small ribosomal subunit protein uS4 (206 aa).

The S4 RNA-binding domain maps to 96–156 (GRLDNVVYRM…EKSKKQSRIK (61 aa)).

It belongs to the universal ribosomal protein uS4 family. Part of the 30S ribosomal subunit. Contacts protein S5. The interaction surface between S4 and S5 is involved in control of translational fidelity.

In terms of biological role, one of the primary rRNA binding proteins, it binds directly to 16S rRNA where it nucleates assembly of the body of the 30S subunit. With S5 and S12 plays an important role in translational accuracy. The chain is Small ribosomal subunit protein uS4 from Photorhabdus laumondii subsp. laumondii (strain DSM 15139 / CIP 105565 / TT01) (Photorhabdus luminescens subsp. laumondii).